The chain runs to 208 residues: Imidazole glycerol phosphate synthase subunit HisH (208 aa).

In terms of domain architecture, Glutamine amidotransferase type-1 spans 1 to 206 (MIVIIDYDTG…KEVIRSCKSS (206 aa)). Cysteine 79 serves as the catalytic Nucleophile. Residues histidine 181 and glutamate 183 contribute to the active site.

In terms of assembly, heterodimer of HisH and HisF.

It localises to the cytoplasm. It catalyses the reaction 5-[(5-phospho-1-deoxy-D-ribulos-1-ylimino)methylamino]-1-(5-phospho-beta-D-ribosyl)imidazole-4-carboxamide + L-glutamine = D-erythro-1-(imidazol-4-yl)glycerol 3-phosphate + 5-amino-1-(5-phospho-beta-D-ribosyl)imidazole-4-carboxamide + L-glutamate + H(+). The catalysed reaction is L-glutamine + H2O = L-glutamate + NH4(+). It participates in amino-acid biosynthesis; L-histidine biosynthesis; L-histidine from 5-phospho-alpha-D-ribose 1-diphosphate: step 5/9. IGPS catalyzes the conversion of PRFAR and glutamine to IGP, AICAR and glutamate. The HisH subunit catalyzes the hydrolysis of glutamine to glutamate and ammonia as part of the synthesis of IGP and AICAR. The resulting ammonia molecule is channeled to the active site of HisF. This Listeria welshimeri serovar 6b (strain ATCC 35897 / DSM 20650 / CCUG 15529 / CIP 8149 / NCTC 11857 / SLCC 5334 / V8) protein is Imidazole glycerol phosphate synthase subunit HisH.